The chain runs to 291 residues: Pantothenate synthetase (291 aa).

30 to 37 (MGYLHAGH) provides a ligand contact to ATP. The active-site Proton donor is H37. Residue Q61 coordinates (R)-pantoate. Residue Q61 coordinates beta-alanine. 147–150 (GEKD) serves as a coordination point for ATP. Position 153 (Q153) interacts with (R)-pantoate. ATP is bound by residues V176 and 184–187 (LSSR).

Belongs to the pantothenate synthetase family. Homodimer.

It localises to the cytoplasm. The enzyme catalyses (R)-pantoate + beta-alanine + ATP = (R)-pantothenate + AMP + diphosphate + H(+). It functions in the pathway cofactor biosynthesis; (R)-pantothenate biosynthesis; (R)-pantothenate from (R)-pantoate and beta-alanine: step 1/1. Its function is as follows. Catalyzes the condensation of pantoate with beta-alanine in an ATP-dependent reaction via a pantoyl-adenylate intermediate. The chain is Pantothenate synthetase from Rhizobium rhizogenes (strain K84 / ATCC BAA-868) (Agrobacterium radiobacter).